The sequence spans 126 residues: MHELSYATSVLNAILEAVEQQEALGRKVIKVNDINLEIGELTLLSVDQLQFVFEVISEDTVCKGAELKAEMVKPKIFCMDCEFEGDLDTKDELEVICPKCESRNVKLKGGKEFNIVNATIEFDDEE.

Ni(2+) is bound at residue His2. Residues Cys78, Cys81, Cys97, and Cys100 each coordinate Zn(2+).

The protein belongs to the HypA/HybF family.

Involved in the maturation of [NiFe] hydrogenases. Required for nickel insertion into the metal center of the hydrogenase. This Methanococcus maripaludis (strain C7 / ATCC BAA-1331) protein is Hydrogenase maturation factor HypA.